A 342-amino-acid chain; its full sequence is Tetraacyldisaccharide 4'-kinase (342 aa).

Residue 68-75 (TVGGTGKT) participates in ATP binding.

The protein belongs to the LpxK family.

The enzyme catalyses a lipid A disaccharide + ATP = a lipid IVA + ADP + H(+). It functions in the pathway glycolipid biosynthesis; lipid IV(A) biosynthesis; lipid IV(A) from (3R)-3-hydroxytetradecanoyl-[acyl-carrier-protein] and UDP-N-acetyl-alpha-D-glucosamine: step 6/6. Functionally, transfers the gamma-phosphate of ATP to the 4'-position of a tetraacyldisaccharide 1-phosphate intermediate (termed DS-1-P) to form tetraacyldisaccharide 1,4'-bis-phosphate (lipid IVA). This is Tetraacyldisaccharide 4'-kinase from Burkholderia cenocepacia (strain ATCC BAA-245 / DSM 16553 / LMG 16656 / NCTC 13227 / J2315 / CF5610) (Burkholderia cepacia (strain J2315)).